We begin with the raw amino-acid sequence, 468 residues long: ATP synthase subunit beta (468 aa).

155 to 162 lines the ATP pocket; it reads GGAGVGKT.

It belongs to the ATPase alpha/beta chains family. As to quaternary structure, F-type ATPases have 2 components, CF(1) - the catalytic core - and CF(0) - the membrane proton channel. CF(1) has five subunits: alpha(3), beta(3), gamma(1), delta(1), epsilon(1). CF(0) has three main subunits: a(1), b(2) and c(9-12). The alpha and beta chains form an alternating ring which encloses part of the gamma chain. CF(1) is attached to CF(0) by a central stalk formed by the gamma and epsilon chains, while a peripheral stalk is formed by the delta and b chains.

The protein localises to the cell membrane. The catalysed reaction is ATP + H2O + 4 H(+)(in) = ADP + phosphate + 5 H(+)(out). Functionally, produces ATP from ADP in the presence of a proton gradient across the membrane. The catalytic sites are hosted primarily by the beta subunits. The protein is ATP synthase subunit beta of Streptococcus pneumoniae (strain ATCC BAA-255 / R6).